Reading from the N-terminus, the 724-residue chain is Peroxidase mlt-7 (724 aa).

The first 24 residues, 1–24, serve as a signal peptide directing secretion; it reads MRRLHRNLSLLFLICILNEYRIES. An N-linked (GlcNAc...) asparagine glycan is attached at Asn7. Positions 25–178 are excised as a propeptide; the sequence is QTLSPPITDR…GCVPQLSDVG (154 aa). The ShKT domain maps to 42–76; sequence CCDHHEWCRFWASIGECNANKDWMTENCQLACGTC. Cys181 and Cys198 form a disulfide bridge. Asn233 is a glycosylation site (N-linked (GlcNAc...) asparagine). Residue His271 is the Proton acceptor of the active site. Position 272 (Asp272) interacts with Ca(2+). A disulfide bridge connects residues Cys284 and Cys294. Ca(2+) contacts are provided by Thr335, Tyr337, Asp339, and Ser341. His493 serves as a coordination point for heme b. Asn509 and Asn617 each carry an N-linked (GlcNAc...) asparagine glycan. 2 disulfide bridges follow: Cys588-Cys645 and Cys686-Cys710.

The protein belongs to the peroxidase family. The cofactor is heme b. Expressed in the hypodermal cells, specifically the head and seam/body.

The catalysed reaction is 2 a phenolic donor + H2O2 = 2 a phenolic radical donor + 2 H2O. Plays an essential role in cuticle biogenesis. Required in combination with bli-3 for correct formation of cross-links in cuticle collagens. This chain is Peroxidase mlt-7, found in Caenorhabditis elegans.